The primary structure comprises 129 residues: UPF0325 protein ECA1027 (129 aa).

This sequence belongs to the UPF0325 family.

This is UPF0325 protein ECA1027 from Pectobacterium atrosepticum (strain SCRI 1043 / ATCC BAA-672) (Erwinia carotovora subsp. atroseptica).